Reading from the N-terminus, the 257-residue chain is Deoxyribose-phosphate aldolase (257 aa).

Asp102 acts as the Proton donor/acceptor in catalysis. Lys166 serves as the catalytic Schiff-base intermediate with acetaldehyde. Lys198 acts as the Proton donor/acceptor in catalysis.

This sequence belongs to the DeoC/FbaB aldolase family. DeoC type 2 subfamily.

It is found in the cytoplasm. It carries out the reaction 2-deoxy-D-ribose 5-phosphate = D-glyceraldehyde 3-phosphate + acetaldehyde. It functions in the pathway carbohydrate degradation; 2-deoxy-D-ribose 1-phosphate degradation; D-glyceraldehyde 3-phosphate and acetaldehyde from 2-deoxy-alpha-D-ribose 1-phosphate: step 2/2. Functionally, catalyzes a reversible aldol reaction between acetaldehyde and D-glyceraldehyde 3-phosphate to generate 2-deoxy-D-ribose 5-phosphate. The protein is Deoxyribose-phosphate aldolase of Shewanella loihica (strain ATCC BAA-1088 / PV-4).